A 100-amino-acid chain; its full sequence is DNA base-flipping protein (100 aa).

Belongs to the MGMT family. ATL subfamily.

In terms of biological role, involved in DNA damage recognition. Binds DNA containing O(6)-methylguanine. Binds to the damaged base and flips the base out of the DNA duplex into an extrahelical conformation, which allows processing by repair proteins. In Vibrio parahaemolyticus serotype O3:K6 (strain AQ3810), this protein is DNA base-flipping protein.